Reading from the N-terminus, the 813-residue chain is Origin of replication complex subunit 1B (813 aa).

Residues 1–109 (MASTPRAKTF…TPKKKKKIDS (109 aa)) form a disordered region. Residues 11–21 (KSPTKTPSNIY) are compositionally biased toward polar residues. A compositionally biased stretch (low complexity) spans 27-41 (SPSSTSHTPQTPETH). Residues 43–52 (PLRRSARHVS) show a composition bias toward basic residues. The short motif at 83–90 (PRKPTTDV) is the Nuclear localization signal element. The tract at residues 163–187 (DPEIEDCQICFKSDTNIMIECDDCL) is histone H3 binding. The segment at 166 to 215 (IEDCQICFKSDTNIMIECDDCLGGFHLKCLKPPLKEVPEGDWICQFCEVK) adopts a PHD-type zinc-finger fold. Residues C169, C172, C183, C186, H191, and C194 each contribute to the Zn(2+) site. The histone H3 binding stretch occupies residues 203–207 (PEGDW). Residues C209 and C212 each coordinate Zn(2+). The BAH domain maps to 226-344 (PKPPEGKKLA…VHWRSFKRLA (119 aa)). Residues 319–324 (ASNDGD) form a histone H3 binding region. The tract at residues 349–372 (GDSDSDQEWNGRKEEEVDDSDEEM) is disordered. The segment at 436–803 (PKSLPCRSKE…DDVAFALKDN (368 aa)) is necessary and sufficient for ORC complex assembly. Residue 471–479 (GVPGTGKTI) participates in ATP binding. The Mg(2+) site is built by D561 and E562. Residues E562, N595, and R660 each contribute to the ATP site.

This sequence belongs to the ORC1 family. As to quaternary structure, component of the origin recognition complex (ORC) composed of at least ORC1 (ORC1A or ORC1B), ORC2, ORC3, ORC4, ORC5 and ORC6. ORC is regulated in a cell-cycle and development dependent manner. It is sequentially assembled at the exit from anaphase of mitosis and disassembled as cells enter S phase. Interacts directly with ORC2 and ORC5. Binds mostly unmodified histone H3, and, with lower efficiency, H3K4me1 H3K4me2 and H3K4me3. As to expression, follow a cell-cycle regulation with a peak at the G1/S-phase. Mostly expressed in flower buds, and, to a lower exent, in roots, leaves and stems.

The protein localises to the nucleus. Functionally, essential protein required for ovules fertilization. Component of the origin recognition complex (ORC) that binds origins of replication. It has a role in both chromosomal replication and mating type transcriptional silencing. Binds to the ARS consensus sequence (ACS) of origins of replication. H3K4me3 effector that positively regulates the transcription of a subset of genes. This chain is Origin of replication complex subunit 1B, found in Arabidopsis thaliana (Mouse-ear cress).